The following is a 790-amino-acid chain: Ribonucleoside-diphosphate reductase large subunit (790 aa).

Residues Thr208, 223–224, Gly254, 436–440, and 621–625 contribute to the substrate site; these read SC, NLCTE, and PTVSS. Cys224 and Cys453 are disulfide-bonded. Asn436 serves as the catalytic Proton acceptor. Cys438 acts as the Cysteine radical intermediate in catalysis. The active-site Proton acceptor is Glu440.

This sequence belongs to the ribonucleoside diphosphate reductase large chain family. Heterotetramer composed of a homodimer of the large subunit (R1) and a homodimer of the small subunit (R2). Larger multisubunit protein complex are also active, composed of (R1)n(R2)n.

The enzyme catalyses a 2'-deoxyribonucleoside 5'-diphosphate + [thioredoxin]-disulfide + H2O = a ribonucleoside 5'-diphosphate + [thioredoxin]-dithiol. Its function is as follows. Ribonucleoside-diphosphate reductase holoenzyme provides the precursors necessary for viral DNA synthesis. Allows virus growth in non-dividing cells, as well as reactivation from latency in infected hosts. Catalyzes the biosynthesis of deoxyribonucleotides from the corresponding ribonucleotides. The protein is Ribonucleoside-diphosphate reductase large subunit of Equus caballus (Horse).